A 286-amino-acid polypeptide reads, in one-letter code: Nucleotide-binding protein PSPA7_5038 (286 aa).

8–15 (GRSGSGKS) contributes to the ATP binding site. 60 to 63 (DARN) contributes to the GTP binding site.

The protein belongs to the RapZ-like family.

In terms of biological role, displays ATPase and GTPase activities. This Pseudomonas paraeruginosa (strain DSM 24068 / PA7) (Pseudomonas aeruginosa (strain PA7)) protein is Nucleotide-binding protein PSPA7_5038.